Reading from the N-terminus, the 93-residue chain is Large ribosomal subunit protein uL23cz/uL23cy (93 aa).

This sequence belongs to the universal ribosomal protein uL23 family. Part of the 50S ribosomal subunit.

The protein localises to the plastid. It is found in the chloroplast. In terms of biological role, binds to 23S rRNA. The sequence is that of Large ribosomal subunit protein uL23cz/uL23cy (rpl23-A) from Drimys granadensis.